Consider the following 139-residue polypeptide: Non-structural protein 1 (139 aa).

Residues 136-139 carry the DLNP; interaction with MAP1B motif; it reads DLNS.

It belongs to the pneumovirus non-structural protein 1 family. As to quaternary structure, monomer. Homomultimer. Heteromultimer with NS2. Interacts with the matrix protein M. Interacts with host ELOC and CUL2; this interaction allows NS1 to form an active E3 ligase with ELOC and CUL2. Interacts with host IRF3; this interaction leads to the disrupted association of IRF3 with CREBBP and thus reduced binding of IRF3 to the IFN-beta promoter. Interacts with host MAVS; this interaction prevents MAVS binding to RIGI and inhibits signaling pathway leading to interferon production. Interacts with host MAP1B/microtubule-associated protein 1B. Interacts with host TRIM25 (via SPRY domain); this interaction suppresses RIGI ubiquitination and results in decreased interaction between RIGI and MAVS.

Its subcellular location is the host cytoplasm. The protein localises to the host mitochondrion. The protein resides in the host nucleus. Plays a major role in antagonizing the type I IFN-mediated antiviral response by degrading or inhibiting multiple cellular factors required for either IFN induction or response pathways. Acts cooperatively with NS2 to repress activation and nuclear translocation of host IFN-regulatory factor IRF3. Also disrupts the association of IRF3 with CREBBP. Interacts with host mitochondrial-associated membrane (MAM) MAVS and prevents the interaction with RIGI. Interacts with TRIM25 to suppress TRIM25-mediated RIGI ubiquitination and thereby RIGI-MAVS interaction. Together with NS2, participates in the proteasomal degradation of host STAT2, IRF3, IRF7, TBK1 and RIGI through a NS-degradasome involving CUL2 and Elongin-C. The degradasome requires an intact mitochondrial MAVS. Decreases the levels of host TRAF3 and IKBKE/IKK-epsilon. As functions other than disruptions of the type I IFN-mediated antiviral signaling pathways, induces host SOCS1 and SOCS3 expression. Suppresses premature apoptosis by an NF-kappa-B-dependent, interferon-independent mechanism and thus facilitates virus growth. Additionally, NS1 may serve some inhibitory role in viral transcription and RNA replication. Suppresses proliferation and activation of host CD103+ CD8+ cytotoxic T-lymphocytes and Th17 helper T-lymphocytes. The protein is Non-structural protein 1 (1C) of Homo sapiens (Human).